The following is a 264-amino-acid chain: Thymidylate synthase (264 aa).

A dUMP-binding site is contributed by R21. H51 is a (6R)-5,10-methylene-5,6,7,8-tetrahydrofolate binding site. DUMP is bound at residue 126–127; the sequence is RR. C146 serves as the catalytic Nucleophile. DUMP contacts are provided by residues 166–169, N177, and 207–209; these read RSCD and HLY. D169 is a binding site for (6R)-5,10-methylene-5,6,7,8-tetrahydrofolate. A (6R)-5,10-methylene-5,6,7,8-tetrahydrofolate-binding site is contributed by A263.

The protein belongs to the thymidylate synthase family. Bacterial-type ThyA subfamily. As to quaternary structure, homodimer.

Its subcellular location is the cytoplasm. The catalysed reaction is dUMP + (6R)-5,10-methylene-5,6,7,8-tetrahydrofolate = 7,8-dihydrofolate + dTMP. Its pathway is pyrimidine metabolism; dTTP biosynthesis. Functionally, catalyzes the reductive methylation of 2'-deoxyuridine-5'-monophosphate (dUMP) to 2'-deoxythymidine-5'-monophosphate (dTMP) while utilizing 5,10-methylenetetrahydrofolate (mTHF) as the methyl donor and reductant in the reaction, yielding dihydrofolate (DHF) as a by-product. This enzymatic reaction provides an intracellular de novo source of dTMP, an essential precursor for DNA biosynthesis. In Shewanella amazonensis (strain ATCC BAA-1098 / SB2B), this protein is Thymidylate synthase.